Consider the following 156-residue polypeptide: Small ribosomal subunit protein uS7 (156 aa).

Belongs to the universal ribosomal protein uS7 family. In terms of assembly, part of the 30S ribosomal subunit. Contacts proteins S9 and S11.

Its function is as follows. One of the primary rRNA binding proteins, it binds directly to 16S rRNA where it nucleates assembly of the head domain of the 30S subunit. Is located at the subunit interface close to the decoding center, probably blocks exit of the E-site tRNA. The sequence is that of Small ribosomal subunit protein uS7 from Bordetella bronchiseptica (strain ATCC BAA-588 / NCTC 13252 / RB50) (Alcaligenes bronchisepticus).